The chain runs to 277 residues: Phosphatidylserine decarboxylase proenzyme (277 aa).

Catalysis depends on charge relay system; for autoendoproteolytic cleavage activity residues aspartate 88, histidine 144, and serine 242. Serine 242 functions as the Schiff-base intermediate with substrate; via pyruvic acid; for decarboxylase activity in the catalytic mechanism. Residue serine 242 is modified to Pyruvic acid (Ser); by autocatalysis.

It belongs to the phosphatidylserine decarboxylase family. PSD-B subfamily. Prokaryotic type I sub-subfamily. As to quaternary structure, heterodimer of a large membrane-associated beta subunit and a small pyruvoyl-containing alpha subunit. Pyruvate is required as a cofactor. Is synthesized initially as an inactive proenzyme. Formation of the active enzyme involves a self-maturation process in which the active site pyruvoyl group is generated from an internal serine residue via an autocatalytic post-translational modification. Two non-identical subunits are generated from the proenzyme in this reaction, and the pyruvate is formed at the N-terminus of the alpha chain, which is derived from the carboxyl end of the proenzyme. The autoendoproteolytic cleavage occurs by a canonical serine protease mechanism, in which the side chain hydroxyl group of the serine supplies its oxygen atom to form the C-terminus of the beta chain, while the remainder of the serine residue undergoes an oxidative deamination to produce ammonia and the pyruvoyl prosthetic group on the alpha chain. During this reaction, the Ser that is part of the protease active site of the proenzyme becomes the pyruvoyl prosthetic group, which constitutes an essential element of the active site of the mature decarboxylase.

It is found in the cell membrane. The catalysed reaction is a 1,2-diacyl-sn-glycero-3-phospho-L-serine + H(+) = a 1,2-diacyl-sn-glycero-3-phosphoethanolamine + CO2. The protein operates within phospholipid metabolism; phosphatidylethanolamine biosynthesis; phosphatidylethanolamine from CDP-diacylglycerol: step 2/2. In terms of biological role, catalyzes the formation of phosphatidylethanolamine (PtdEtn) from phosphatidylserine (PtdSer). The chain is Phosphatidylserine decarboxylase proenzyme from Psychrobacter cryohalolentis (strain ATCC BAA-1226 / DSM 17306 / VKM B-2378 / K5).